The chain runs to 336 residues: Dihydroorotate dehydrogenase (quinone) (336 aa).

Residues 62-66 (AGLDK) and Thr-86 each bind FMN. A substrate-binding site is contributed by Lys-66. 111–115 (NRMGF) contributes to the substrate binding site. The FMN site is built by Asn-139 and Asn-172. Asn-172 contacts substrate. Ser-175 serves as the catalytic Nucleophile. Asn-177 provides a ligand contact to substrate. FMN-binding residues include Lys-217 and Thr-245. Substrate is bound at residue 246 to 247 (NT). FMN is bound by residues Gly-268, Gly-297, and 318–319 (YS).

This sequence belongs to the dihydroorotate dehydrogenase family. Type 2 subfamily. In terms of assembly, monomer. FMN is required as a cofactor.

The protein localises to the cell membrane. The enzyme catalyses (S)-dihydroorotate + a quinone = orotate + a quinol. The protein operates within pyrimidine metabolism; UMP biosynthesis via de novo pathway; orotate from (S)-dihydroorotate (quinone route): step 1/1. Its function is as follows. Catalyzes the conversion of dihydroorotate to orotate with quinone as electron acceptor. The protein is Dihydroorotate dehydrogenase (quinone) of Edwardsiella ictaluri (strain 93-146).